The primary structure comprises 656 residues: Chaperone protein DnaK (656 aa).

2 disordered regions span residues 488–532 and 579–656; these read EMQE…DAVD and YQQQ…DEDE. A compositionally biased stretch (basic and acidic residues) spans 492–513; that stretch reads EAEKHAEEDEKRRERIEARNEA. The segment covering 523–532 has biased composition (acidic residues); the sequence is LLDENEDAVD. Residues 584–635 show a composition bias toward gly residues; the sequence is GEGGAGAGAGAAGGMGGAGPGGMGGAGPGGMGGAGPGGMGGAGPGAGAGQQG. Acidic residues predominate over residues 636 to 656; that stretch reads DGEEFVDADFEDVDDEDDEDE.

It belongs to the heat shock protein 70 family.

Acts as a chaperone. This chain is Chaperone protein DnaK, found in Natronomonas pharaonis (strain ATCC 35678 / DSM 2160 / CIP 103997 / JCM 8858 / NBRC 14720 / NCIMB 2260 / Gabara) (Halobacterium pharaonis).